The following is a 121-amino-acid chain: MARISGIDIPREKRVEVALTYIYGIGLTRAQAILEKSGVNPDIRVKDLDDGDIQKLRAVTEEFTLEGDLRRQEGMALKRLQDIGCVRGRRHRMSLPVRGQRTRTNARTRRGARKTVAGRKK.

Positions 97–121 are disordered; the sequence is VRGQRTRTNARTRRGARKTVAGRKK. The span at 100-121 shows a compositional bias: basic residues; that stretch reads QRTRTNARTRRGARKTVAGRKK.

Belongs to the universal ribosomal protein uS13 family. In terms of assembly, part of the 30S ribosomal subunit. Forms a loose heterodimer with protein S19. Forms two bridges to the 50S subunit in the 70S ribosome.

Its function is as follows. Located at the top of the head of the 30S subunit, it contacts several helices of the 16S rRNA. In the 70S ribosome it contacts the 23S rRNA (bridge B1a) and protein L5 of the 50S subunit (bridge B1b), connecting the 2 subunits; these bridges are implicated in subunit movement. Contacts the tRNAs in the A and P-sites. This chain is Small ribosomal subunit protein uS13, found in Prochlorococcus marinus (strain NATL1A).